Consider the following 193-residue polypeptide: Allatostatin A (193 aa).

The N-terminal stretch at 1-25 (MKTSSLIAMRLIIFYLLSVVGRSTA) is a signal peptide. Positions 26-64 (AVEEAPASSLHIPRLNPLSSNLEYDEPSEKRAYAYISEY) are excised as a propeptide. An Isoleucine amide modification is found at Ile-74. A propeptide spanning residues 78 to 84 (WIDNSED) is cleaved from the precursor. Isoleucine amide occurs at positions 94 and 105. Residues 109–139 (NSGYRPLGMDFSVDNMDFHSREDNLDDFIDD) constitute a propeptide that is removed on maturation. Ile-150 bears the Isoleucine amide mark. At Ser-165 the chain carries Serine amide. A propeptide spanning residues 169–193 (LNDVVGPKYLLGLGKGLSENENLIQ) is cleaved from the precursor.

It belongs to the allatostatin family. In terms of tissue distribution, allatostatins A1, A2 and A3 are expressed in brain, antennal lobes, optical lobes, gnathal ganglia, the retrocerebral complex and thoracic, abdominal and ventral ganglia. Allatostain A4 is expressed in brain (at protein level).

It localises to the secreted. Functionally, may act as a neurotransmitter or neuromodulator. This chain is Allatostatin A, found in Camponotus floridanus (Florida carpenter ant).